The following is a 419-amino-acid chain: Glucose-1-phosphate adenylyltransferase (419 aa).

Alpha-D-glucose 1-phosphate contacts are provided by residues tyrosine 106, glycine 171, 186–187 (EK), and serine 204.

This sequence belongs to the bacterial/plant glucose-1-phosphate adenylyltransferase family. As to quaternary structure, homotetramer.

It catalyses the reaction alpha-D-glucose 1-phosphate + ATP + H(+) = ADP-alpha-D-glucose + diphosphate. The protein operates within glycan biosynthesis; glycogen biosynthesis. Functionally, involved in the biosynthesis of ADP-glucose, a building block required for the elongation reactions to produce glycogen. Catalyzes the reaction between ATP and alpha-D-glucose 1-phosphate (G1P) to produce pyrophosphate and ADP-Glc. The protein is Glucose-1-phosphate adenylyltransferase of Roseobacter denitrificans (strain ATCC 33942 / OCh 114) (Erythrobacter sp. (strain OCh 114)).